The following is a 209-amino-acid chain: Protein-L-isoaspartate O-methyltransferase (209 aa).

Serine 59 is a catalytic residue.

It belongs to the methyltransferase superfamily. L-isoaspartyl/D-aspartyl protein methyltransferase family.

The protein localises to the cytoplasm. The catalysed reaction is [protein]-L-isoaspartate + S-adenosyl-L-methionine = [protein]-L-isoaspartate alpha-methyl ester + S-adenosyl-L-homocysteine. Functionally, catalyzes the methyl esterification of L-isoaspartyl residues in peptides and proteins that result from spontaneous decomposition of normal L-aspartyl and L-asparaginyl residues. It plays a role in the repair and/or degradation of damaged proteins. The chain is Protein-L-isoaspartate O-methyltransferase from Helicobacter pylori (strain P12).